Here is a 277-residue protein sequence, read N- to C-terminus: MDNHTAKDIGMKRSASELALQEYLTTSPLDPCFDLMNRDYTCELRDSLLWSEGLFPAGPFRDAQSSICENLSADSPVSANKPEVRGGVRRTTSGSSHVNSDDEDAETEAGQSEMTNDPNDLKRIRRMNSNRESAKRSRRRKQEYLVDLETQVDSLKGDNSTLYKQLIDATQQFRSAGTNNRVLKSDVETLRVKVKLAEDLVARGSLTSSLNQLLQTHLSPPSHSISSLHYTGNTSPAITVHSDQSLFPGMTLSGQNSSPGLGNVSSEAVSCVSDIWP.

The disordered stretch occupies residues 73–141 (ADSPVSANKP…ESAKRSRRRK (69 aa)). At Ser100 the chain carries Phosphoserine. Residues 109–118 (AGQSEMTNDP) show a composition bias toward polar residues. In terms of domain architecture, bZIP spans 120–183 (DLKRIRRMNS…RSAGTNNRVL (64 aa)). A basic motif region spans residues 122 to 141 (KRIRRMNSNRESAKRSRRRK). The short motif at 124–131 (IRRMNSNR) is the Nuclear localization signal element. The interval 148 to 162 (LETQVDSLKGDNSTL) is leucine-zipper.

The protein belongs to the bZIP family. As to quaternary structure, homodimer. Interacts with BZIP1, BZIP2, BZIP10, BZIP11, BZIP25, BZIP44, BZIP53 and BZIP63. Phosphorylated. Expressed in roots, shoots, stems, young leaves, and flowers, mostly in vascular tissues (e.g. phloem).

Its subcellular location is the nucleus. In terms of biological role, transcription factor. This is Basic leucine zipper 9 (BZIP9) from Arabidopsis thaliana (Mouse-ear cress).